A 74-amino-acid chain; its full sequence is Protein krueppel (74 aa).

4 consecutive C2H2-type zinc fingers follow at residues 1 to 4 (ERTH), 10 to 32 (FECQ…MRLH), 38 to 60 (YRCE…LRVH), and 66 to 74 (YGCEHCSMK).

Belongs to the krueppel C2H2-type zinc-finger protein family.

It is found in the nucleus. Its function is as follows. Krueppel is a gap class segmentation protein. In Tribolium castaneum (Red flour beetle), this protein is Protein krueppel (Kr).